A 220-amino-acid chain; its full sequence is MGQKINPYGLRLGITTDHVSHWYSDSTRPGQRYADYVSEDIKIRSYLTKTLDRAGIARIEIERTRDRIRVDIYTARPGIVIGRRGAEADRYRLELEKITSKQVQLNILEVKNPETTARLVAQGIAEQLAARVAFRRAMRKGLQSATSAGVRGIRIRLAGRLGGAEISRSEFYIEGQVPLQTLRASIDYGFYEARTPYGHIGVKVWIYKKPSVRGRTEGGG.

The KH type-2 domain occupies 43-111 (IRSYLTKTLD…QVQLNILEVK (69 aa)).

It belongs to the universal ribosomal protein uS3 family. Part of the 30S ribosomal subunit. Forms a tight complex with proteins S10 and S14.

Functionally, binds the lower part of the 30S subunit head. Binds mRNA in the 70S ribosome, positioning it for translation. This Tropheryma whipplei (strain TW08/27) (Whipple's bacillus) protein is Small ribosomal subunit protein uS3.